The primary structure comprises 138 residues: Putative transcriptional regulatory protein NedR (138 aa).

Residues 1-25 (MCWGRSWTFGRSSSKGWRPTSSASS) form a disordered region. Polar residues predominate over residues 9–25 (FGRSSSKGWRPTSSASS).

Its function is as follows. May serve as a transcriptional regulator. The sequence is that of Putative transcriptional regulatory protein NedR (nedR) from Micromonospora viridifaciens.